We begin with the raw amino-acid sequence, 774 residues long: Potassium/sodium hyperpolarization-activated cyclic nucleotide-gated channel 3 (774 aa).

The tract at residues 1–48 (MEAEQRPAAGASEGATPGLEAVPPVAPPPATAASGPIPKSGPEPKRRH) is disordered. Residues 1–97 (MEAEQRPAAG…PYSDFRFYWD (97 aa)) are Cytoplasmic-facing. Residues 46–91 (RRHLGTLLQPTVNKFSLRVFGSHKAVEIEQERVKSAGAWIIHPYSD) are involved in subunit assembly. Residues 98–118 (LIMLLLMVGNLIVLPVGITFF) form a helical membrane-spanning segment. At 119–124 (KEENSP) the chain is on the extracellular side. The helical transmembrane segment at 125–145 (PWIVFNVLSDTFFLLDLVLNF) threads the bilayer. The Cytoplasmic segment spans residues 146–171 (RTGIVVEEGAEILLAPRAIRTRYLRT). A helical membrane pass occupies residues 172–192 (WFLVDLISSIPVDYIFLVVEL). The Extracellular segment spans residues 193–201 (EPRLDAEVY). The chain crosses the membrane as a helical; Voltage-sensor span at residues 202-222 (KTARALRIVRFTKILSLLRLL). Residues 223–253 (RLSRLIRYIHQWEEIFHMTYDLASAVVRIFN) lie on the Cytoplasmic side of the membrane. Residues 254 to 274 (LIGMMLLLCHWDGCLQFLVPM) form a helical membrane-spanning segment. Residues 275–297 (LQDFPPDCWVSINHMVNHSWGRQ) are Extracellular-facing. N-linked (GlcNAc...) asparagine glycosylation occurs at Asn291. An intramembrane region (pore-forming) is located at residues 298 to 319 (YSHALFKAMSHMLCIGYGQQAP). Topologically, residues 320 to 329 (VGMPDVWLTM) are extracellular. The helical transmembrane segment at 330–350 (LSMIVGATCYAMFIGHATALI) threads the bilayer. Residues 351-774 (QSLDSSRRQY…PRGLQLSANM (424 aa)) lie on the Cytoplasmic side of the membrane. Positions 354 to 774 (DSSRRQYQEK…PRGLQLSANM (421 aa)) are interaction with KCTD3. 3',5'-cyclic AMP is bound by residues Gly492, Glu493, Cys495, Arg502, Thr503, Arg543, and Arg546. Ser634 is modified (phosphoserine). Positions 682–774 (SLSRAGRSQV…PRGLQLSANM (93 aa)) are disordered. Pro residues predominate over residues 751-763 (TAQPPRPPVPEPA).

Belongs to the potassium channel HCN family. Homotetramer. The potassium channel is composed of a homo- or heterotetrameric complex of pore-forming subunits. Interacts with HCN11. Interacts with KCTD3; this interaction increases cell surface expression and current density of this channel. Interacts with PEX5L. As to expression, detected in brain.

Its subcellular location is the cell membrane. The enzyme catalyses K(+)(in) = K(+)(out). It carries out the reaction Na(+)(in) = Na(+)(out). Unlike HCN2 and HCN4, HCN3 is insensitive to cyclic nucleotides, such as cAMP or cGMP. This lack of sensitivity of HCN3, despite harboring a functional cyclic nucleotide-binding domain (CNBD), may be explained by its shorter C-terminal sequence, which may alter the normal autoinhibition of the channel. Inhibited by Cs(1+) and ZD7288. Phosphatidylinositol-4,5-bisphosphate (PIP(2)) shifts HCN3 activation to more depolarized potentials and accelerated activation kinetics. Functionally, hyperpolarization-activated ion channel that are permeable to sodium and potassium ions, with an about 3:1 preference for potassium ions. Contributes to the native pacemaker currents in heart (If) and in neurons (Ih). In particular, plays a pivotal role in maintaining excitability and promoting rhythmic burst firing within hypothalamic nuclei. Exerts a significant influence on the configuration of the cardiac action potential waveform. Does not appear to play a prominent role in the processing of acute, neuropathic, or inflammatory pain. The sequence is that of Potassium/sodium hyperpolarization-activated cyclic nucleotide-gated channel 3 (HCN3) from Homo sapiens (Human).